The primary structure comprises 353 residues: 3-dehydroquinate synthase (353 aa).

NAD(+)-binding positions include Asp62–Lys67, Gly96–Asp100, Thr120–Thr121, Lys133, and Lys142. Residues Glu175, His236, and His253 each contribute to the Zn(2+) site.

This sequence belongs to the sugar phosphate cyclases superfamily. Dehydroquinate synthase family. NAD(+) is required as a cofactor. It depends on Co(2+) as a cofactor. Requires Zn(2+) as cofactor.

The protein resides in the cytoplasm. It catalyses the reaction 7-phospho-2-dehydro-3-deoxy-D-arabino-heptonate = 3-dehydroquinate + phosphate. Its pathway is metabolic intermediate biosynthesis; chorismate biosynthesis; chorismate from D-erythrose 4-phosphate and phosphoenolpyruvate: step 2/7. Catalyzes the conversion of 3-deoxy-D-arabino-heptulosonate 7-phosphate (DAHP) to dehydroquinate (DHQ). The sequence is that of 3-dehydroquinate synthase from Helicobacter hepaticus (strain ATCC 51449 / 3B1).